The chain runs to 154 residues: Transcriptional repressor NrdR (154 aa).

A zinc finger spans residues 3 to 34; that stretch reads CPFCAHPDTRVADSRLMEERNAVRRRRHCPNC. One can recognise an ATP-cone domain in the interval 49–139; sequence PAVIGPDKKR…LHKRFDNPAD (91 aa).

Belongs to the NrdR family. Requires Zn(2+) as cofactor.

Functionally, negatively regulates transcription of bacterial ribonucleotide reductase nrd genes and operons by binding to NrdR-boxes. The polypeptide is Transcriptional repressor NrdR (Neisseria meningitidis serogroup B (strain ATCC BAA-335 / MC58)).